The sequence spans 70 residues: U2-agatoxin-Ao1d (70 aa).

The first 20 residues, 1 to 20 (MRAIIYLLLISAMVFSMTKA), serve as a signal peptide directing secretion. A propeptide spanning residues 21 to 34 (VPEEEGLQLSEDER) is cleaved from the precursor. 3 cysteine pairs are disulfide-bonded: cysteine 37–cysteine 53, cysteine 44–cysteine 58, and cysteine 52–cysteine 68. Residue leucine 69 is modified to Leucine amide.

The protein belongs to the neurotoxin 01 (U2-agtx) family. Expressed by the venom gland.

Its subcellular location is the secreted. Its function is as follows. Insect active toxin causing rapid but reversible paralysis in crickets. No activity shown in mammals. Does not show effect on mammalian voltage-gated calcium channels. The sequence is that of U2-agatoxin-Ao1d from Agelena orientalis (Funnel-web spider).